The following is an 85-amino-acid chain: Probable small nuclear ribonucleoprotein G (85 aa).

One can recognise a Sm domain in the interval 6 to 78 (QADPDLTKLL…ILLMEPLESM (73 aa)).

Belongs to the snRNP Sm proteins family. In terms of assembly, core component of the spliceosomal U1, U2, U4 and U5 small nuclear ribonucleoproteins (snRNPs), the building blocks of the spliceosome. Most spliceosomal snRNPs contain a common set of Sm proteins, SNRPB, SNRPD1, SNRPD2, SNRPD3, SNRPE, SNRPF and SNRPG that assemble in a heptameric protein ring on the Sm site of the small nuclear RNA to form the core snRNP. Component of the U1 snRNP. Component of the U4/U6-U5 tri-snRNP complex. Component of the U7 snRNP complex. Component of the U11/U12 snRNPs that are part of the U12-type spliceosome.

It localises to the cytoplasm. The protein resides in the cytosol. It is found in the nucleus. In terms of biological role, plays a role in pre-mRNA splicing as a core component of the spliceosomal U1, U2, U4 and U5 small nuclear ribonucleoproteins (snRNPs), the building blocks of the spliceosome. Component of both the pre-catalytic spliceosome B complex and activated spliceosome C complexes. Is also a component of the minor U12 spliceosome. This chain is Probable small nuclear ribonucleoprotein G (snrpG), found in Dictyostelium discoideum (Social amoeba).